A 297-amino-acid chain; its full sequence is Cytidine deaminase (297 aa).

CMP/dCMP-type deaminase domains follow at residues 54 to 174 (SSVE…FGPK) and 192 to 297 (LRGD…YIEV). 95-97 (NQE) provides a ligand contact to substrate. Histidine 108 is a binding site for Zn(2+). Catalysis depends on glutamate 110, which acts as the Proton donor. Cysteine 135 and cysteine 138 together coordinate Zn(2+).

This sequence belongs to the cytidine and deoxycytidylate deaminase family. In terms of assembly, homodimer. The cofactor is Zn(2+).

The catalysed reaction is cytidine + H2O + H(+) = uridine + NH4(+). It catalyses the reaction 2'-deoxycytidine + H2O + H(+) = 2'-deoxyuridine + NH4(+). This enzyme scavenges exogenous and endogenous cytidine and 2'-deoxycytidine for UMP synthesis. In Actinobacillus pleuropneumoniae serotype 5b (strain L20), this protein is Cytidine deaminase.